Reading from the N-terminus, the 201-residue chain is Pyridoxine/pyridoxamine 5'-phosphate oxidase (201 aa).

FMN is bound by residues 49–54 (RMVLLK), 64–65 (YT), Lys-71, and Gln-93. Lys-54 serves as a coordination point for substrate. Positions 111, 115, and 119 each coordinate substrate. FMN contacts are provided by residues 128 to 129 (QS) and Trp-172. Residue 178–180 (RLH) coordinates substrate. An FMN-binding site is contributed by Arg-182.

Belongs to the pyridoxamine 5'-phosphate oxidase family. As to quaternary structure, homodimer. It depends on FMN as a cofactor.

It carries out the reaction pyridoxamine 5'-phosphate + O2 + H2O = pyridoxal 5'-phosphate + H2O2 + NH4(+). It catalyses the reaction pyridoxine 5'-phosphate + O2 = pyridoxal 5'-phosphate + H2O2. Its pathway is cofactor metabolism; pyridoxal 5'-phosphate salvage; pyridoxal 5'-phosphate from pyridoxamine 5'-phosphate: step 1/1. It participates in cofactor metabolism; pyridoxal 5'-phosphate salvage; pyridoxal 5'-phosphate from pyridoxine 5'-phosphate: step 1/1. Functionally, catalyzes the oxidation of either pyridoxine 5'-phosphate (PNP) or pyridoxamine 5'-phosphate (PMP) into pyridoxal 5'-phosphate (PLP). This is Pyridoxine/pyridoxamine 5'-phosphate oxidase from Roseobacter denitrificans (strain ATCC 33942 / OCh 114) (Erythrobacter sp. (strain OCh 114)).